A 754-amino-acid polypeptide reads, in one-letter code: 5-methyltetrahydropteroyltriglutamate--homocysteine methyltransferase (754 aa).

5-methyltetrahydropteroyltri-L-glutamate is bound by residues 17–20 and K117; that span reads RELK. L-homocysteine contacts are provided by residues 431 to 433 and E484; that span reads IGS. Residues 431 to 433 and E484 contribute to the L-methionine site; that span reads IGS. Residues 515–516 and W561 each bind 5-methyltetrahydropteroyltri-L-glutamate; that span reads RC. D599 is a binding site for L-homocysteine. D599 is an L-methionine binding site. E605 is a 5-methyltetrahydropteroyltri-L-glutamate binding site. Residues H641, C643, and E665 each coordinate Zn(2+). Residue H694 is the Proton donor of the active site. C726 lines the Zn(2+) pocket.

Belongs to the vitamin-B12 independent methionine synthase family. The cofactor is Zn(2+).

The enzyme catalyses 5-methyltetrahydropteroyltri-L-glutamate + L-homocysteine = tetrahydropteroyltri-L-glutamate + L-methionine. The protein operates within amino-acid biosynthesis; L-methionine biosynthesis via de novo pathway; L-methionine from L-homocysteine (MetE route): step 1/1. Functionally, catalyzes the transfer of a methyl group from 5-methyltetrahydrofolate to homocysteine resulting in methionine formation. This Salmonella dublin (strain CT_02021853) protein is 5-methyltetrahydropteroyltriglutamate--homocysteine methyltransferase.